An 85-amino-acid chain; its full sequence is Fungal defensin triintsin (85 aa).

A signal peptide spans 1 to 21; it reads MQFTKLATVLIVSLMGSAAIA. Residues 22 to 47 constitute a propeptide that is removed on maturation; it reads APSVDNAPAVAAEEVAAAPAENLEKR. 3 disulfides stabilise this stretch: cysteine 51–cysteine 72, cysteine 58–cysteine 80, and cysteine 62–cysteine 82.

The protein belongs to the invertebrate defensin family. Disulfide bonds are essential for antimicrobial activity.

It is found in the secreted. Antimicrobial peptide with broad-spectrum activity against Gram-positive bacteria, Gram-negative bacteria, and fungi. Also inhibits clinical isolates, including methicillin-resistant S.aureus (MRSA) (MIC=32 uM), K.pneumoniae, C.albicans and C.parapsilosis. Displays minimal inhibitory concentration (MIC) values similar to minimal bactericidal concentrations (MBC), suggesting a disruptive mechanism mode of action associated with membrane lysis. In vitro, shows hemolytic activity against human red blood cells. In Trichophyton interdigitale (strain MR816), this protein is Fungal defensin triintsin.